A 92-amino-acid chain; its full sequence is Small ribosomal subunit protein uS19 (92 aa).

This sequence belongs to the universal ribosomal protein uS19 family.

In terms of biological role, protein S19 forms a complex with S13 that binds strongly to the 16S ribosomal RNA. In Baumannia cicadellinicola subsp. Homalodisca coagulata, this protein is Small ribosomal subunit protein uS19.